The following is a 476-amino-acid chain: Membrane-bound lytic murein transglycosylase F (476 aa).

A signal peptide spans 1–22 (MTRFLFALILGFLLTACQQVTV). A non-LT domain region spans residues 23–257 (DETEFVPKKL…HLNEKYFGHV (235 aa)). The tract at residues 258 to 476 (KRFDYVDTRA…AGTLSPEQPK (219 aa)) is LT domain. Glutamate 302 is an active-site residue. The tract at residues 446 to 476 (SKQQNPEEEPSDLASEEPAIPAGTLSPEQPK) is disordered. Over residues 451–460 (PEEEPSDLAS) the composition is skewed to acidic residues.

It in the N-terminal section; belongs to the bacterial solute-binding protein 3 family. This sequence in the C-terminal section; belongs to the transglycosylase Slt family.

It localises to the cell outer membrane. It carries out the reaction Exolytic cleavage of the (1-&gt;4)-beta-glycosidic linkage between N-acetylmuramic acid (MurNAc) and N-acetylglucosamine (GlcNAc) residues in peptidoglycan, from either the reducing or the non-reducing ends of the peptidoglycan chains, with concomitant formation of a 1,6-anhydrobond in the MurNAc residue.. Functionally, murein-degrading enzyme that degrades murein glycan strands and insoluble, high-molecular weight murein sacculi, with the concomitant formation of a 1,6-anhydromuramoyl product. Lytic transglycosylases (LTs) play an integral role in the metabolism of the peptidoglycan (PG) sacculus. Their lytic action creates space within the PG sacculus to allow for its expansion as well as for the insertion of various structures such as secretion systems and flagella. This chain is Membrane-bound lytic murein transglycosylase F, found in Shewanella baltica (strain OS155 / ATCC BAA-1091).